We begin with the raw amino-acid sequence, 458 residues long: Estrogen-related receptor gamma (458 aa).

Lys40 is covalently cross-linked (Glycyl lysine isopeptide (Lys-Gly) (interchain with G-Cter in SUMO)). Residues 42–52 (EPSSPASLTDS) show a composition bias toward polar residues. Residues 42 to 85 (EPSSPASLTDSVNHHSPGGSSDASGSYSSTMNGHQNGLDSPPLY) form a disordered region. Residue Ser45 is modified to Phosphoserine. Over residues 57 to 70 (SPGGSSDASGSYSS) the composition is skewed to low complexity. Positions 125-200 (KRLCLVCGDI…VGMLKEGVRL (76 aa)) form a DNA-binding region, nuclear receptor. 2 consecutive NR C4-type zinc fingers follow at residues 128–148 (CLVC…CEAC) and 164–188 (CPAT…FMKC). An NR LBD domain is found at 233-457 (PYNKIVSHLL…KLFLEMLEAK (225 aa)).

Belongs to the nuclear hormone receptor family. NR3 subfamily. As to quaternary structure, homodimer. Binds TLE1, PNRC1 and PNRC2. Binds GRIP1. Interacts with NRIP1, NCOA1 and NCOR2. Post-translationally, acetylated by PCAF/KAT2 (in vitro). Sumoylation on Lys-40 is enhanced by phosphorylation at Ser-45 and represses transcriptional activity. In terms of processing, phosphorylation on Ser-45 enhances sumoylation on Lys-40 thus repressing transcriptional activity. Expressed in the heart, kidney, brain, lung, bone marrow, adrenal gland, trachea, spinal cord and thyroid gland.

It is found in the nucleus. In terms of biological role, orphan receptor that acts as a transcription activator in the absence of bound ligand. Binds specifically to an estrogen response element and activates reporter genes controlled by estrogen response elements. Induces the expression of PERM1 in the skeletal muscle. The polypeptide is Estrogen-related receptor gamma (ESRRG) (Homo sapiens (Human)).